The following is a 338-amino-acid chain: Tetraacyldisaccharide 4'-kinase (338 aa).

53–60 (VAGGAGKT) contacts ATP.

Belongs to the LpxK family.

It carries out the reaction a lipid A disaccharide + ATP = a lipid IVA + ADP + H(+). It participates in glycolipid biosynthesis; lipid IV(A) biosynthesis; lipid IV(A) from (3R)-3-hydroxytetradecanoyl-[acyl-carrier-protein] and UDP-N-acetyl-alpha-D-glucosamine: step 6/6. Functionally, transfers the gamma-phosphate of ATP to the 4'-position of a tetraacyldisaccharide 1-phosphate intermediate (termed DS-1-P) to form tetraacyldisaccharide 1,4'-bis-phosphate (lipid IVA). This chain is Tetraacyldisaccharide 4'-kinase, found in Polaromonas sp. (strain JS666 / ATCC BAA-500).